An 81-amino-acid polypeptide reads, in one-letter code: MQPIQIAIAALVVAIIIAIVVWSIVIIEYRKILRQRKIDRLIDRLIERAEDSGNESEGEISALVEMGVEMGHHAPWDIDDL.

Residues 1–6 (MQPIQI) lie on the Extracellular side of the membrane. The helical transmembrane segment at 7 to 27 (AIAALVVAIIIAIVVWSIVII) threads the bilayer. Residues 28-81 (EYRKILRQRKIDRLIDRLIERAEDSGNESEGEISALVEMGVEMGHHAPWDIDDL) lie on the Cytoplasmic side of the membrane. Phosphoserine; by host CK2 is present on residues Ser-52 and Ser-56.

The protein belongs to the HIV-1 VPU protein family. As to quaternary structure, homopentamer. Interacts with host CD4 and BRTC; these interactions induce proteasomal degradation of CD4. Interacts with host BST2; this interaction leads to the degradation of host BST2. Interacts with host FBXW11. Interacts with host AP1M1; this interaction plays a role in the mistrafficking and subsequent degradation of host BST2. Interacts with host RANBP2; this interaction allows Vpu to down-regulate host BLM sumoylation. Post-translationally, phosphorylated by host CK2. This phosphorylation is necessary for interaction with human BTRC and degradation of CD4.

It localises to the host membrane. Ion channel activity is inhibited by hexamethylene amiloride in vitro. Enhances virion budding by targeting host CD4 and Tetherin/BST2 to proteasome degradation. Degradation of CD4 prevents any unwanted premature interactions between viral Env and its host receptor CD4 in the endoplasmic reticulum. Degradation of antiretroviral protein Tetherin/BST2 is important for virion budding, as BST2 tethers new viral particles to the host cell membrane. Mechanistically, Vpu bridges either CD4 or BST2 to BTRC, a substrate recognition subunit of the Skp1/Cullin/F-box protein E3 ubiquitin ligase, induces their ubiquitination and subsequent proteasomal degradation. The alteration of the E3 ligase specificity by Vpu seems to promote the degradation of host IKBKB, leading to NF-kappa-B down-regulation and subsequent apoptosis. Acts as a viroporin that forms an oligomeric ion channel in membranes. Modulates the host DNA repair mechanisms to promote degradation of nuclear viral cDNA in cells that are already productively infected in order to suppress immune sensing and proviral hyper-integration (superinfection). Manipulates PML-NBs and modulates SUMOylation of host BLM protein thereby enhancing its DNA-end processing activity toward viral unintegrated linear DNA. Also inhibits RAD52-mediated homologous repair of viral cDNA, preventing the generation of dead-end circular forms of single copies of the long terminal repeat and permitting sustained nucleolytic attack. This Homo sapiens (Human) protein is Protein Vpu.